The sequence spans 149 residues: Arginine repressor (149 aa).

This sequence belongs to the ArgR family.

It localises to the cytoplasm. The protein operates within amino-acid biosynthesis; L-arginine biosynthesis [regulation]. Its function is as follows. Regulates arginine biosynthesis genes. The sequence is that of Arginine repressor from Exiguobacterium sp. (strain ATCC BAA-1283 / AT1b).